The chain runs to 70 residues: U2-agatoxin-Ao1d (70 aa).

An N-terminal signal peptide occupies residues 1–20; the sequence is MRAIIYLLLISAMVFSMTKA. A propeptide spanning residues 21-34 is cleaved from the precursor; the sequence is VPEEEGLQLSEDER. Disulfide bonds link Cys37-Cys53, Cys44-Cys58, and Cys52-Cys68. Leu69 is modified (leucine amide).

This sequence belongs to the neurotoxin 01 (U2-agtx) family. In terms of tissue distribution, expressed by the venom gland.

It localises to the secreted. In terms of biological role, insect active toxin causing rapid but reversible paralysis in crickets. No activity shown in mammals. Does not show effect on mammalian voltage-gated calcium channels. The polypeptide is U2-agatoxin-Ao1d (Agelena orientalis (Funnel-web spider)).